We begin with the raw amino-acid sequence, 483 residues long: SWI/SNF-related matrix-associated actin-dependent regulator of chromatin subfamily D member 3 (483 aa).

N-acetylalanine is present on Ala2. A disordered region spans residues 26-102; sequence VRPGMPSGAR…ARSRSAKRRK (77 aa). A compositionally biased stretch (low complexity) spans 78-87; it reads QSQAQSQGQP. The residue at position 178 (Ser178) is a Phosphoserine. Positions 258 to 335 constitute an SWIB/MDM2 domain; it reads YQPPQFKLDP…PQRLTALLLP (78 aa).

Belongs to the SMARCD family. As to quaternary structure, component of the multiprotein chromatin-remodeling complexes SWI/SNF: SWI/SNF-A (BAF), SWI/SNF-B (PBAF) and related complexes. The canonical complex contains a catalytic subunit (either SMARCA4/BRG1/BAF190A or SMARCA2/BRM/BAF190B) and at least SMARCE1, ACTL6A/BAF53, SMARCC1/BAF155, SMARCC2/BAF170, and SMARCB1/SNF5/BAF47. Other subunits specific to each of the complexes may also be present permitting several possible combinations developmentally and tissue specific. Component of the BAF complex, which includes at least actin (ACTB), ARID1A/BAF250A, ARID1B/BAF250B, SMARCA2/BRM, SMARCA4/BRG1/BAF190A, ACTL6A/BAF53, ACTL6B/BAF53B, SMARCE1/BAF57, SMARCC1/BAF155, SMARCC2/BAF170, SMARCB1/SNF5/INI1, and one or more SMARCD1/BAF60A, SMARCD2/BAF60B, or SMARCD3/BAF60C. In muscle cells, the BAF complex also contains DPF3. Component of neural progenitors-specific chromatin remodeling complex (npBAF complex) composed of at least, ARID1A/BAF250A or ARID1B/BAF250B, SMARCD1/BAF60A, SMARCD3/BAF60C, SMARCA2/BRM/BAF190B, SMARCA4/BRG1/BAF190A, SMARCB1/BAF47, SMARCC1/BAF155, SMARCE1/BAF57, SMARCC2/BAF170, PHF10/BAF45A, ACTL6A/BAF53A and actin. Component of neuron-specific chromatin remodeling complex (nBAF complex) composed of at least, ARID1A/BAF250A or ARID1B/BAF250B, SMARCD1/BAF60A, SMARCD3/BAF60C, SMARCA2/BRM/BAF190B, SMARCA4/BRG1/BAF190A, SMARCB1/BAF47, SMARCC1/BAF155, SMARCE1/BAF57, SMARCC2/BAF170, DPF1/BAF45B, DPF3/BAF45C, ACTL6B/BAF53B and actin. May be a component of the SWI/SNF-B (PBAF) chromatin remodeling complex, at least composed of SMARCA4/BRG1, SMARCB1/BAF47/SNF5, ACTL6A/BAF53A or ACTL6B/BAF53B, SMARCE1/BAF57, SMARCD1/BAF60A, SMARCD2/BAF60B, perhaps SMARCD3/BAF60C, SMARCC1/BAF155, SMARCC2/BAF170, PBRM1/BAF180, ARID2/BAF200 and actin. Interacts with SMARCA4/BRG1/BAF190A. Component of SWI/SNF (GBAF) subcomplex, which includes at least BICRA or BICRAL (mutually exclusive), BRD9, SS18, SMARCA2/BRM, SMARCA4/BRG1/BAF190A, ACTL6A/BAF53, SMARCC1/BAF155, and SMARCD1/BAF60A. The precise distribution of the related SMARCD1, SMARCD2 and SMARCD3 proteins among these and other SWI/SNF nucleosome-remodeling complexes is not fully known. May allow recruitment of SWI/SNF containing complexes specifically to promoters where these factors are located. Also interacts with several nuclear receptors including PPARG/NR1C3, RXRA/NR1F1, ESR1, NR5A1, NR5A2/LRH1 and other transcriptional activators including the HLH protein SREBF1/SREBP1 and the homeobox protein PBX1. Interacts with PRDM1/BLIMP1. As to expression, isoform 2 and isoform 1 are expressed in brain, heart, kidney, placenta, prostate, salivary gland, spleen, testis, thyroid, trachea and uterus. Isoform 1 is also expressed in skeletal muscle and adipose tissue.

It is found in the nucleus. Functionally, involved in transcriptional activation and repression of select genes by chromatin remodeling (alteration of DNA-nucleosome topology). Component of SWI/SNF chromatin remodeling complexes that carry out key enzymatic activities, changing chromatin structure by altering DNA-histone contacts within a nucleosome in an ATP-dependent manner. Stimulates nuclear receptor mediated transcription. Belongs to the neural progenitors-specific chromatin remodeling complex (npBAF complex) and the neuron-specific chromatin remodeling complex (nBAF complex). During neural development a switch from a stem/progenitor to a postmitotic chromatin remodeling mechanism occurs as neurons exit the cell cycle and become committed to their adult state. The transition from proliferating neural stem/progenitor cells to postmitotic neurons requires a switch in subunit composition of the npBAF and nBAF complexes. As neural progenitors exit mitosis and differentiate into neurons, npBAF complexes which contain ACTL6A/BAF53A and PHF10/BAF45A, are exchanged for homologous alternative ACTL6B/BAF53B and DPF1/BAF45B or DPF3/BAF45C subunits in neuron-specific complexes (nBAF). The npBAF complex is essential for the self-renewal/proliferative capacity of the multipotent neural stem cells. The nBAF complex along with CREST plays a role regulating the activity of genes essential for dendrite growth. The sequence is that of SWI/SNF-related matrix-associated actin-dependent regulator of chromatin subfamily D member 3 (SMARCD3) from Homo sapiens (Human).